An 825-amino-acid polypeptide reads, in one-letter code: Probable inorganic carbon transporter subunit DabA (825 aa).

Cys-334, Asp-336, His-521, and Cys-536 together coordinate Zn(2+).

The protein belongs to the inorganic carbon transporter (TC 9.A.2) DabA family. Forms a complex with DabB. Zn(2+) serves as cofactor.

It localises to the cell inner membrane. In terms of biological role, part of an energy-coupled inorganic carbon pump. The chain is Probable inorganic carbon transporter subunit DabA from Acidithiobacillus ferrooxidans (strain ATCC 23270 / DSM 14882 / CIP 104768 / NCIMB 8455) (Ferrobacillus ferrooxidans (strain ATCC 23270)).